The following is a 1611-amino-acid chain: Pentafunctional AROM polypeptide (1611 aa).

Residues 1 to 406 form a 3-dehydroquinate synthase region; the sequence is MSQVSGGKVP…VEERASTVSD (406 aa). Residues 64 to 66, 97 to 100, 128 to 130, and D133 each bind NAD(+); these read DTN, EESK, and GGV. 7-phospho-2-dehydro-3-deoxy-D-arabino-heptonate is bound at residue R144. Residue 153 to 154 participates in NAD(+) binding; that stretch reads TT. Positions 160 and 166 each coordinate 7-phospho-2-dehydro-3-deoxy-D-arabino-heptonate. K175 is an NAD(+) binding site. Residue N176 coordinates 7-phospho-2-dehydro-3-deoxy-D-arabino-heptonate. Residues 193–196 and N204 each bind NAD(+); that span reads WLLT. E208 contributes to the Zn(2+) binding site. 7-phospho-2-dehydro-3-deoxy-D-arabino-heptonate is bound by residues 208 to 211 and K272; that span reads EVIK. The active-site Proton acceptor; for 3-dehydroquinate synthase activity is the E282. Residues 286 to 290 and H293 each bind 7-phospho-2-dehydro-3-deoxy-D-arabino-heptonate; that span reads RNLVN. H293 serves as a coordination point for Zn(2+). H297 acts as the Proton acceptor; for 3-dehydroquinate synthase activity in catalysis. 7-phospho-2-dehydro-3-deoxy-D-arabino-heptonate is bound by residues H309 and K378. Residue H309 coordinates Zn(2+). The EPSP synthase stretch occupies residues 419-882; the sequence is VRESVSAPRP…WDVLGGPLNV (464 aa). C864 acts as the For EPSP synthase activity in catalysis. The tract at residues 915–1092 is shikimate kinase; that stretch reads DASIVLIGMR…VPISPAFFLS (178 aa). Residue 922–929 participates in ATP binding; sequence GMRASGKS. The segment at 1093 to 1309 is 3-dehydroquinase; that stretch reads LTFPRVQDAW…AAPGQMSVRD (217 aa). H1212 (proton acceptor; for 3-dehydroquinate dehydratase activity) is an active-site residue. K1240 acts as the Schiff-base intermediate with substrate; for 3-dehydroquinate dehydratase activity in catalysis. Positions 1322-1611 are shikimate dehydrogenase; sequence KRHFFLFGSP…AAYRAAAASM (290 aa).

The protein in the N-terminal section; belongs to the sugar phosphate cyclases superfamily. Dehydroquinate synthase family. It in the 2nd section; belongs to the EPSP synthase family. In the 3rd section; belongs to the shikimate kinase family. This sequence in the 4th section; belongs to the type-I 3-dehydroquinase family. The protein in the C-terminal section; belongs to the shikimate dehydrogenase family. In terms of assembly, homodimer. The cofactor is Zn(2+).

The protein localises to the cytoplasm. The enzyme catalyses 7-phospho-2-dehydro-3-deoxy-D-arabino-heptonate = 3-dehydroquinate + phosphate. It catalyses the reaction 3-dehydroquinate = 3-dehydroshikimate + H2O. It carries out the reaction shikimate + NADP(+) = 3-dehydroshikimate + NADPH + H(+). The catalysed reaction is shikimate + ATP = 3-phosphoshikimate + ADP + H(+). The enzyme catalyses 3-phosphoshikimate + phosphoenolpyruvate = 5-O-(1-carboxyvinyl)-3-phosphoshikimate + phosphate. The protein operates within metabolic intermediate biosynthesis; chorismate biosynthesis; chorismate from D-erythrose 4-phosphate and phosphoenolpyruvate: step 2/7. It participates in metabolic intermediate biosynthesis; chorismate biosynthesis; chorismate from D-erythrose 4-phosphate and phosphoenolpyruvate: step 3/7. Its pathway is metabolic intermediate biosynthesis; chorismate biosynthesis; chorismate from D-erythrose 4-phosphate and phosphoenolpyruvate: step 4/7. It functions in the pathway metabolic intermediate biosynthesis; chorismate biosynthesis; chorismate from D-erythrose 4-phosphate and phosphoenolpyruvate: step 5/7. The protein operates within metabolic intermediate biosynthesis; chorismate biosynthesis; chorismate from D-erythrose 4-phosphate and phosphoenolpyruvate: step 6/7. The AROM polypeptide catalyzes 5 consecutive enzymatic reactions in prechorismate polyaromatic amino acid biosynthesis. This is Pentafunctional AROM polypeptide from Malassezia globosa (strain ATCC MYA-4612 / CBS 7966) (Dandruff-associated fungus).